The following is a 239-amino-acid chain: MINDVISPEFDENGRAMRRIRSFVRRQGRLTKGQQLALDNYWPVMGVEYQPTPVDFTALFGREAPVVLEIGFGMGTSLVTMAASNPQQNFLGIEVHSPGVGACLASAHEAGLNNLRVMCHDAVEVLENMIPDSSLDMVQLFFPDPWHKARHNKRRIVQAPFVELVKSKLKVGGVFHMATDWQHYAEHMLEVMSGANGYRNLSEQNDYVPRPDSRPLTKFELRGQRLGHGVWDLMFERKE.

S-adenosyl-L-methionine-binding residues include glutamate 69, glutamate 94, aspartate 121, and aspartate 144. Aspartate 144 is a catalytic residue. Substrate is bound at residue lysine 148. Residues 150–155 (RHNKRR) form an interaction with RNA region. Residues aspartate 180 and 217-220 (TKFE) each bind substrate.

This sequence belongs to the class I-like SAM-binding methyltransferase superfamily. TrmB family. As to quaternary structure, monomer.

It catalyses the reaction guanosine(46) in tRNA + S-adenosyl-L-methionine = N(7)-methylguanosine(46) in tRNA + S-adenosyl-L-homocysteine. It participates in tRNA modification; N(7)-methylguanine-tRNA biosynthesis. In terms of biological role, catalyzes the formation of N(7)-methylguanine at position 46 (m7G46) in tRNA. This chain is tRNA (guanine-N(7)-)-methyltransferase, found in Yersinia enterocolitica serotype O:8 / biotype 1B (strain NCTC 13174 / 8081).